Reading from the N-terminus, the 1485-residue chain is MQRSPVEDANCLSRYFFWWTNPIMRKGFKEKLRPSDVYQAPSQDAADILAERLEKEWDREVASGKKKPSLLRAMARCYIKPFLLFGFLLYIGEATKTVQPQLLGRIIASFDPAHEPERANGYFLAFGLGLLFTARFLLLQPAMFGLHHLGMQIRIALFSIIYKKTLKLSSRVLDKISTGQLVSLMSANLGKFDQSLGMAHFIWISPLQCILCTGLIWELIDVNSFCALAAISLLGVLQAFLSHKMGPYKAQKVLLTNKRLALTSEIMENLHSVKAYGWEEIMETLIKNIRQDEVKLTRKIGSLRYFYSSAYFFSAIFVIVAAVVPHALSRGINLRRIFTTLSYCMVLRMTVTRQLPGSIQMWYDTMRLIWKIEEFLSKEEYKLMEYDLSITELELQDVTASWDEGPGELLERIKQENKANGHHNGDAGLFFTNLYVAPVLKDISLKLKKGEMLAVTGSMGSGKSSLLMTILGELVPSSGKIRHSGRISYSSQTAWIMPGTIRDNILFGLTYDEYRYKSVVKACQLEEDLAALPEKDKTPMAEGGLNLSGGQKARVALARAVYRDADLYLLDAPFTHLDIATEKEIFDKCLCKLMASKTRILVTNKIEHLKRADKILLLHNGESFFYGTFPELQSERPDFSSLLLGLEAYDNISAERRCSILTETLHRVSVDESAGMQPERSAFRQVPPTKPMYIDERKASVIVNPLGVARKASFIQVPEEEVRRTLPDRKFSLVPENELVDESFMGSDVYHNHGVHMAGQRRQSVLAFMTNAQGQGRREHLQSSFRRRLSVVPQSELASELDIYTRRLSDSTYDMTGILEEENIEACLTDEIDEIEETFETTKWNTYVRYVSNNKSLLYVLIFILFIAAIEIAGSVAGIFLITDELWREEHQRSEPNMTKHSNASSSGQTYAITVTPTSSYYILYIYVATSESLLAMGFFRGLPFVHTTITISKKLHQKMLHAVLSAPMSVLNTMKTGRIMNRFTKDMATIDDMLPLLMFDFVQLTVVVVGCILVVSIVRPYIFLAATPLAIIFIVMRKYFLRTGQQLKQLETEARSPIFSHLIMSLKGLWTIRAFERQAYFEALFHKTLNTHTATWFLYLSTLRWFLFRADILFVFFFTLAAWIAVGTNQDKPGEIGIIICLAMLILGTFQWCVATSIAVDGMMRSVDRVFKFIDLPSETPKPDKGKDSDLIIENVDAQADSSWPHRGQIEVRNLTVKYTEAGHAVLKNLSFSAEGRQRVGILGRTGSGKSSLFNALLKLVYTDGEISIDGVNWNKMPLQKWRKAFGVVPQKVFIFTGPLRMNLDPYGCHSDEELWRVAEEVGLKTVIEQFPDKLDFQLEYGGYVLSNGHKQLICLARSILSGARILLLDEPSAHLDPVTIKVLKKTLRQSFSTCTILLSEHKVEPLLECQSFLMMDKGQVKTYDSIQKLLNETSHLKQAISPAERLKLFPRRNSSMRTPQSKLSSVTQTLQEEAEDNIQDTRL.

The Cytoplasmic segment spans residues 1-78 (MQRSPVEDAN…SLLRAMARCY (78 aa)). The helical transmembrane segment at 79–99 (IKPFLLFGFLLYIGEATKTVQ) threads the bilayer. The ABC transmembrane type-1 1 domain maps to 83-353 (LLFGFLLYIG…CMVLRMTVTR (271 aa)). Residues 100 to 123 (PQLLGRIIASFDPAHEPERANGYF) lie on the Extracellular side of the membrane. Residues 124 to 149 (LAFGLGLLFTARFLLLQPAMFGLHHL) form a helical membrane-spanning segment. Residues 150 to 195 (GMQIRIALFSIIYKKTLKLSSRVLDKISTGQLVSLMSANLGKFDQS) are Cytoplasmic-facing. A helical membrane pass occupies residues 196–216 (LGMAHFIWISPLQCILCTGLI). Residues 217-224 (WELIDVNS) lie on the Extracellular side of the membrane. The chain crosses the membrane as a helical span at residues 225-245 (FCALAAISLLGVLQAFLSHKM). Residues 246–299 (GPYKAQKVLLTNKRLALTSEIMENLHSVKAYGWEEIMETLIKNIRQDEVKLTRK) are Cytoplasmic-facing. A helical membrane pass occupies residues 300–320 (IGSLRYFYSSAYFFSAIFVIV). The Extracellular portion of the chain corresponds to 321 to 340 (AAVVPHALSRGINLRRIFTT). The chain crosses the membrane as a helical span at residues 341–363 (LSYCMVLRMTVTRQLPGSIQMWY). Topologically, residues 364–856 (DTMRLIWKIE…YVRYVSNNKS (493 aa)) are cytoplasmic. ATP is bound by residues W402, 457–464 (GSMGSGKS), and Q492. Residues 424-645 (NGDAGLFFTN…RPDFSSLLLG (222 aa)) form the ABC transporter 1 domain. The segment at 653-826 (SAERRCSILT…GILEEENIEA (174 aa)) is disordered R region. The helical transmembrane segment at 857–877 (LLYVLIFILFIAAIEIAGSVA) threads the bilayer. One can recognise an ABC transmembrane type-1 2 domain in the interval 860–1163 (VLIFILFIAA…CVATSIAVDG (304 aa)). Residues 878–924 (GIFLITDELWREEHQRSEPNMTKHSNASSSGQTYAITVTPTSSYYIL) are Extracellular-facing. N-linked (GlcNAc...) asparagine glycans are attached at residues N897 and N903. A discontinuously helical transmembrane segment spans residues 925–946 (YIYVATSESLLAMGFFRGLPFV). At 947-996 (HTTITISKKLHQKMLHAVLSAPMSVLNTMKTGRIMNRFTKDMATIDDMLP) the chain is on the cytoplasmic side. Residues 997-1019 (LLMFDFVQLTVVVVGCILVVSIV) form a helical membrane-spanning segment. The Extracellular portion of the chain corresponds to 1020-1021 (RP). Residues 1022 to 1042 (YIFLAATPLAIIFIVMRKYFL) form a helical membrane-spanning segment. Over 1043–1103 (RTGQQLKQLE…TATWFLYLST (61 aa)) the chain is Cytoplasmic. The helical transmembrane segment at 1104–1124 (LRWFLFRADILFVFFFTLAAW) threads the bilayer. Over 1125–1138 (IAVGTNQDKPGEIG) the chain is Extracellular. The helical transmembrane segment at 1139 to 1159 (IIICLAMLILGTFQWCVATSI) threads the bilayer. Topologically, residues 1160–1485 (AVDGMMRSVD…AEDNIQDTRL (326 aa)) are cytoplasmic. The ABC transporter 2 domain maps to 1211-1444 (IEVRNLTVKY…TSHLKQAISP (234 aa)). ATP contacts are provided by residues Y1220 and 1245–1252 (GRTGSGKS). A disordered region spans residues 1452 to 1485 (PRRNSSMRTPQSKLSSVTQTLQEEAEDNIQDTRL). Over residues 1454–1473 (RNSSMRTPQSKLSSVTQTLQ) the composition is skewed to polar residues. Acidic residues predominate over residues 1474 to 1485 (EEAEDNIQDTRL). The PDZ-binding signature appears at 1483–1485 (TRL).

It belongs to the ABC transporter superfamily. ABCC family. CFTR transporter (TC 3.A.1.202) subfamily. As to quaternary structure, monomer; does not require oligomerization for channel activity. Interacts with cse1l; this interaction may down-regulate cftr activity. Post-translationally, phosphorylated; this activates the channel. Dephosphorylation strongly decreases ATPase activity. Phosphorylation at PKA sites activates the channel. Phosphorylation at PKC sites enhances the response to phosphorylation by PKA. As to expression, detected in gut epithelium (at protein level). Detected in kidney, spleen, intestine and liver. Detected in pancreatic duct epithelium at 5 dpf and throughout adult life.

The protein localises to the apical cell membrane. The protein resides in the early endosome membrane. It localises to the cell membrane. It is found in the recycling endosome membrane. Its subcellular location is the endoplasmic reticulum membrane. It catalyses the reaction ATP + H2O + closed Cl(-) channel = ADP + phosphate + open Cl(-) channel.. The enzyme catalyses chloride(in) = chloride(out). It carries out the reaction hydrogencarbonate(in) = hydrogencarbonate(out). The catalysed reaction is ATP + H2O = ADP + phosphate + H(+). Its function is as follows. Epithelial ion channel that plays an important role in the regulation of epithelial ion and water transport and fluid homeostasis. Mediates the transport of chloride ions across the cell membrane. Possesses an intrinsic ATPase activity and utilizes ATP to gate its channel; the passive flow of anions through the channel is gated by cycles of ATP binding and hydrolysis by the ATP-binding domains. The ion channel is also permeable to HCO(3)(-); selectivity depends on the extracellular chloride concentration. Exerts its function also by modulating the activity of other ion channels and transporters. Contributes to the regulation of the pH and the ion content of the epithelial fluid layer. Required for normal fluid homeostasis in the gut. Required for normal volume expansion and cell shape changes of Kupffer's vesicle during embryonic development and for normal establishment of left-right body patterning. Required for normal resistance to infection by P.aeruginosa strain PA14 and strain SMC573. This Danio rerio (Zebrafish) protein is Cystic fibrosis transmembrane conductance regulator.